The chain runs to 889 residues: A disintegrin and metalloproteinase with thrombospondin motifs 8 (889 aa).

The N-terminal stretch at 1-26 is a signal peptide; the sequence is MLPAPAAPRWPPLLLLLLLLLPLARG. Residues 27–213 constitute a propeptide that is removed on maturation; the sequence is APARPAAGGQ…PLGATSRTKR (187 aa). The segment at 138–210 is disordered; sequence QGAGGSLAQP…PPPPLGATSR (73 aa). Residues 173 to 183 show a composition bias toward basic and acidic residues; it reads EGQRQERGDHQ. Residues 184–197 are compositionally biased toward acidic residues; the sequence is EDSEEESQEEEAEG. Residues 219–429 form the Peptidase M12B domain; sequence RFVETLLVAD…GHGDCLLDAP (211 aa). 11 disulfide bridges follow: Cys294-Cys347, Cys323-Cys329, Cys341-Cys424, Cys379-Cys408, Cys452-Cys477, Cys463-Cys486, Cys472-Cys507, Cys501-Cys512, Cys538-Cys575, Cys542-Cys580, and Cys553-Cys565. N-linked (GlcNAc...) asparagine glycosylation is present at Asn344. Residue His363 coordinates Zn(2+). Glu364 is a catalytic residue. Positions 367 and 373 each coordinate Zn(2+). Asn400, Asn465, and Asn490 each carry an N-linked (GlcNAc...) asparagine glycan. Positions 438-525 constitute a Disintegrin domain; it reads GLPGRMALYQ…EEVERPKPVA (88 aa). Residues 526-581 form the TSP type-1 1 domain; that stretch reads DGGWAPWGPWGECSRTCGGGVQFSHRECKDPEPQNGGRYCLGRRAKYQSCHTEECP. Asn599 carries N-linked (GlcNAc...) asparagine glycosylation. The tract at residues 690–831 is spacer; it reads RKVSGSLTPT…RATTNIIQPL (142 aa). The TSP type-1 2 domain occupies 833 to 888; the sequence is HAQWVLGDWSECSSTCGAGWQRRTVECRDPSGQASATCNKALKPEDAKPCESQLCP.

It depends on Zn(2+) as a cofactor. The precursor is cleaved by a furin endopeptidase. In terms of processing, glycosylated. Can be O-fucosylated by POFUT2 on a serine or a threonine residue found within the consensus sequence C1-X(2)-(S/T)-C2-G of the TSP type-1 repeat domains where C1 and C2 are the first and second cysteine residue of the repeat, respectively. Fucosylated repeats can then be further glycosylated by the addition of a beta-1,3-glucose residue by the glucosyltransferase, B3GALTL. Fucosylation mediates the efficient secretion of ADAMTS family members. Can also be C-glycosylated with one or two mannose molecules on tryptophan residues within the consensus sequence W-X-X-W of the TPRs, and N-glycosylated. These other glycosylations can also facilitate secretion. Highly expressed in adult and fetal lung, lower expression in brain, placenta, heart, stomach and fetal brain and kidney.

The protein resides in the secreted. It is found in the extracellular space. The protein localises to the extracellular matrix. Functionally, has anti-angiogenic properties. This chain is A disintegrin and metalloproteinase with thrombospondin motifs 8 (ADAMTS8), found in Homo sapiens (Human).